Here is a 337-residue protein sequence, read N- to C-terminus: Glyceraldehyde-3-phosphate dehydrogenase (337 aa).

NAD(+) contacts are provided by residues 12–13 (RI), Asp-36, Arg-80, and Ser-122. D-glyceraldehyde 3-phosphate is bound by residues 153–155 (SCT) and Thr-184. Cys-154 (nucleophile) is an active-site residue. Asn-185 provides a ligand contact to NAD(+). D-glyceraldehyde 3-phosphate contacts are provided by residues Arg-199, 212–213 (TG), and Arg-235. Asn-318 is an NAD(+) binding site.

The protein belongs to the glyceraldehyde-3-phosphate dehydrogenase family. Homotetramer.

It is found in the cytoplasm. The enzyme catalyses D-glyceraldehyde 3-phosphate + phosphate + NAD(+) = (2R)-3-phospho-glyceroyl phosphate + NADH + H(+). Its pathway is carbohydrate degradation; glycolysis; pyruvate from D-glyceraldehyde 3-phosphate: step 1/5. In terms of biological role, catalyzes the oxidative phosphorylation of glyceraldehyde 3-phosphate (G3P) to 1,3-bisphosphoglycerate (BPG) using the cofactor NAD. The first reaction step involves the formation of a hemiacetal intermediate between G3P and a cysteine residue, and this hemiacetal intermediate is then oxidized to a thioester, with concomitant reduction of NAD to NADH. The reduced NADH is then exchanged with the second NAD, and the thioester is attacked by a nucleophilic inorganic phosphate to produce BPG. In Zymomonas mobilis subsp. mobilis (strain ATCC 31821 / ZM4 / CP4), this protein is Glyceraldehyde-3-phosphate dehydrogenase (gap).